We begin with the raw amino-acid sequence, 283 residues long: ATP phosphoribosyltransferase (283 aa).

This sequence belongs to the ATP phosphoribosyltransferase family. Long subfamily. Mg(2+) serves as cofactor.

It is found in the cytoplasm. The catalysed reaction is 1-(5-phospho-beta-D-ribosyl)-ATP + diphosphate = 5-phospho-alpha-D-ribose 1-diphosphate + ATP. It participates in amino-acid biosynthesis; L-histidine biosynthesis; L-histidine from 5-phospho-alpha-D-ribose 1-diphosphate: step 1/9. Its activity is regulated as follows. Feedback inhibited by histidine. In terms of biological role, catalyzes the condensation of ATP and 5-phosphoribose 1-diphosphate to form N'-(5'-phosphoribosyl)-ATP (PR-ATP). Has a crucial role in the pathway because the rate of histidine biosynthesis seems to be controlled primarily by regulation of HisG enzymatic activity. The polypeptide is ATP phosphoribosyltransferase (Rhodococcus opacus (strain B4)).